The primary structure comprises 176 residues: NAD(P)H-quinone oxidoreductase subunit 6, chloroplastic (176 aa).

Helical transmembrane passes span 10-30 (FLLV…VLFT), 32-52 (PIFS…LYIL), 61-81 (AQLL…VMFM), 95-115 (VGDG…ISTI), and 152-172 (FFLP…GAIS).

Belongs to the complex I subunit 6 family. NDH is composed of at least 16 different subunits, 5 of which are encoded in the nucleus.

The protein localises to the plastid. The protein resides in the chloroplast thylakoid membrane. The enzyme catalyses a plastoquinone + NADH + (n+1) H(+)(in) = a plastoquinol + NAD(+) + n H(+)(out). The catalysed reaction is a plastoquinone + NADPH + (n+1) H(+)(in) = a plastoquinol + NADP(+) + n H(+)(out). In terms of biological role, NDH shuttles electrons from NAD(P)H:plastoquinone, via FMN and iron-sulfur (Fe-S) centers, to quinones in the photosynthetic chain and possibly in a chloroplast respiratory chain. The immediate electron acceptor for the enzyme in this species is believed to be plastoquinone. Couples the redox reaction to proton translocation, and thus conserves the redox energy in a proton gradient. The sequence is that of NAD(P)H-quinone oxidoreductase subunit 6, chloroplastic (ndhG) from Aethionema grandiflorum (Persian stone-cress).